The chain runs to 170 residues: UPF0316 protein CLK_3798 (170 aa).

2 consecutive transmembrane segments (helical) span residues 1-21 (MLSYYAFIFFAKIMEVALMTI) and 36-56 (IIGFIEVTIWLYVTSSVLSGI).

It belongs to the UPF0316 family.

It is found in the cell membrane. The sequence is that of UPF0316 protein CLK_3798 from Clostridium botulinum (strain Loch Maree / Type A3).